Reading from the N-terminus, the 619-residue chain is Dihydroxy-acid dehydratase (619 aa).

Residue D81 coordinates Mg(2+). C122 contacts [2Fe-2S] cluster. D123 and K124 together coordinate Mg(2+). K124 is modified (N6-carboxylysine). A [2Fe-2S] cluster-binding site is contributed by C195. E494 is a binding site for Mg(2+). The Proton acceptor role is filled by S520.

It belongs to the IlvD/Edd family. As to quaternary structure, homodimer. Requires [2Fe-2S] cluster as cofactor. It depends on Mg(2+) as a cofactor.

It catalyses the reaction (2R)-2,3-dihydroxy-3-methylbutanoate = 3-methyl-2-oxobutanoate + H2O. The catalysed reaction is (2R,3R)-2,3-dihydroxy-3-methylpentanoate = (S)-3-methyl-2-oxopentanoate + H2O. The protein operates within amino-acid biosynthesis; L-isoleucine biosynthesis; L-isoleucine from 2-oxobutanoate: step 3/4. Its pathway is amino-acid biosynthesis; L-valine biosynthesis; L-valine from pyruvate: step 3/4. Its function is as follows. Functions in the biosynthesis of branched-chain amino acids. Catalyzes the dehydration of (2R,3R)-2,3-dihydroxy-3-methylpentanoate (2,3-dihydroxy-3-methylvalerate) into 2-oxo-3-methylpentanoate (2-oxo-3-methylvalerate) and of (2R)-2,3-dihydroxy-3-methylbutanoate (2,3-dihydroxyisovalerate) into 2-oxo-3-methylbutanoate (2-oxoisovalerate), the penultimate precursor to L-isoleucine and L-valine, respectively. This Shewanella sp. (strain ANA-3) protein is Dihydroxy-acid dehydratase.